The chain runs to 499 residues: Glutamyl-tRNA(Gln) amidotransferase subunit A, mitochondrial (499 aa).

Residues Lys61 and Ser139 each act as charge relay system in the active site. The active-site Acyl-ester intermediate is the Ser163.

This sequence belongs to the amidase family. GatA subfamily. In terms of assembly, subunit of the heterotrimeric GatCAB amidotransferase (AdT) complex, composed of A, B and C subunits.

The protein resides in the mitochondrion. It carries out the reaction L-glutamyl-tRNA(Gln) + L-glutamine + ATP + H2O = L-glutaminyl-tRNA(Gln) + L-glutamate + ADP + phosphate + H(+). Allows the formation of correctly charged Gln-tRNA(Gln) through the transamidation of misacylated Glu-tRNA(Gln) in the mitochondria. The reaction takes place in the presence of glutamine and ATP through an activated gamma-phospho-Glu-tRNA(Gln). The chain is Glutamyl-tRNA(Gln) amidotransferase subunit A, mitochondrial from Coccidioides posadasii (strain C735) (Valley fever fungus).